Consider the following 344-residue polypeptide: Uroporphyrinogen decarboxylase (344 aa).

Residues 23–27 (RQAGR), Asp-73, Tyr-149, Thr-204, and His-321 contribute to the substrate site.

Belongs to the uroporphyrinogen decarboxylase family. Homodimer.

The protein localises to the cytoplasm. It carries out the reaction uroporphyrinogen III + 4 H(+) = coproporphyrinogen III + 4 CO2. The protein operates within porphyrin-containing compound metabolism; protoporphyrin-IX biosynthesis; coproporphyrinogen-III from 5-aminolevulinate: step 4/4. In terms of biological role, catalyzes the decarboxylation of four acetate groups of uroporphyrinogen-III to yield coproporphyrinogen-III. In Francisella tularensis subsp. holarctica (strain LVS), this protein is Uroporphyrinogen decarboxylase.